A 122-amino-acid chain; its full sequence is Small ribosomal subunit protein uS13 (122 aa).

Positions 95–122 (NLPVRGQRTHTNARTRKGKAKPIAGKKK) are disordered.

The protein belongs to the universal ribosomal protein uS13 family. As to quaternary structure, part of the 30S ribosomal subunit. Forms a loose heterodimer with protein S19. Forms two bridges to the 50S subunit in the 70S ribosome.

Located at the top of the head of the 30S subunit, it contacts several helices of the 16S rRNA. In the 70S ribosome it contacts the 23S rRNA (bridge B1a) and protein L5 of the 50S subunit (bridge B1b), connecting the 2 subunits; these bridges are implicated in subunit movement. Contacts the tRNAs in the A and P-sites. In Methylobacterium sp. (strain 4-46), this protein is Small ribosomal subunit protein uS13.